The primary structure comprises 429 residues: Adenylosuccinate synthetase (429 aa).

GTP-binding positions include 12 to 18 (GDEGKGK) and 40 to 42 (GHT). The active-site Proton acceptor is the D13. Residues D13 and G40 each contribute to the Mg(2+) site. Residues 13–16 (DEGK), 38–41 (NAGH), T128, R142, Q223, T238, and R302 contribute to the IMP site. Residue H41 is the Proton donor of the active site. Position 298-304 (298-304 (VNTGRPR)) interacts with substrate. GTP-binding positions include R304, 330 to 332 (KLD), and 412 to 414 (GVG).

Belongs to the adenylosuccinate synthetase family. In terms of assembly, homodimer. Mg(2+) is required as a cofactor.

The protein localises to the cytoplasm. The catalysed reaction is IMP + L-aspartate + GTP = N(6)-(1,2-dicarboxyethyl)-AMP + GDP + phosphate + 2 H(+). It participates in purine metabolism; AMP biosynthesis via de novo pathway; AMP from IMP: step 1/2. Functionally, plays an important role in the de novo pathway of purine nucleotide biosynthesis. Catalyzes the first committed step in the biosynthesis of AMP from IMP. The chain is Adenylosuccinate synthetase from Arthrobacter sp. (strain FB24).